Here is a 587-residue protein sequence, read N- to C-terminus: 5-aminolevulinate synthase, erythroid-specific, mitochondrial (587 aa).

A mitochondrion-targeting transit peptide spans 1 to 49 (MVTAAMLLQCCPVPARGPTSLLGKVVKTHQFLFGIGRCPILATQGPNCS). A succinyl-CoA-binding site is contributed by Arg163. Positions 258 and 259 each coordinate pyridoxal 5'-phosphate. Succinyl-CoA contacts are provided by Ser280 and Lys299. Ser332, His360, and Thr388 together coordinate pyridoxal 5'-phosphate. Lys391 is an active-site residue. Lys391 is subject to N6-(pyridoxal phosphate)lysine. Pyridoxal 5'-phosphate contacts are provided by Thr420 and Thr421. Residue Thr508 participates in succinyl-CoA binding.

Belongs to the class-II pyridoxal-phosphate-dependent aminotransferase family. Homodimer. Interacts with SUCLA2. Pyridoxal 5'-phosphate is required as a cofactor.

It localises to the mitochondrion inner membrane. It catalyses the reaction succinyl-CoA + glycine + H(+) = 5-aminolevulinate + CO2 + CoA. Its pathway is porphyrin-containing compound metabolism; protoporphyrin-IX biosynthesis; 5-aminolevulinate from glycine: step 1/1. Functionally, catalyzes the pyridoxal 5'-phosphate (PLP)-dependent condensation of succinyl-CoA and glycine to form aminolevulinic acid (ALA), with CoA and CO2 as by-products. Contributes significantly to heme formation during erythropoiesis. This Pongo abelii (Sumatran orangutan) protein is 5-aminolevulinate synthase, erythroid-specific, mitochondrial (ALAS2).